The chain runs to 219 residues: Thymidylate kinase (219 aa).

Gly10–Thr17 is an ATP binding site.

It belongs to the thymidylate kinase family.

It catalyses the reaction dTMP + ATP = dTDP + ADP. Functionally, phosphorylation of dTMP to form dTDP in both de novo and salvage pathways of dTTP synthesis. This chain is Thymidylate kinase, found in Pectobacterium carotovorum subsp. carotovorum (strain PC1).